A 435-amino-acid chain; its full sequence is Hyaluronidase-1 (435 aa).

A signal peptide spans 1–21 (MAAHLLPICALFLTLLDMAQG). 2 cysteine pairs are disulfide-bonded: Cys-43–Cys-333 and Cys-207–Cys-221. Asn-99 is a glycosylation site (N-linked (GlcNAc...) asparagine). The Proton donor role is filled by Glu-131. 2 N-linked (GlcNAc...) asparagine glycosylation sites follow: Asn-216 and Asn-350. The region spanning 354 to 430 (GALLCSQALC…YPGWQAPWCE (77 aa)) is the EGF-like domain. 3 cysteine pairs are disulfide-bonded: Cys-358–Cys-369, Cys-363–Cys-418, and Cys-420–Cys-429.

The protein belongs to the glycosyl hydrolase 56 family. Highly expressed in the liver, kidney and heart. Weakly expressed in lung, placenta and skeletal muscle. No expression detected in adult brain. Isoform 1 is expressed only in bladder and prostate cancer cells, G2/G3 bladder tumor tissues and lymph node specimens showing tumor invasive tumors cells. Isoform 3, isoform 4, isoform 5 and isoform 6 are expressed in normal bladder and bladder tumor tissues.

It localises to the secreted. The protein resides in the lysosome. The enzyme catalyses Random hydrolysis of (1-&gt;4)-linkages between N-acetyl-beta-D-glucosamine and D-glucuronate residues in hyaluronate.. Its function is as follows. May have a role in promoting tumor progression. May block the TGFB1-enhanced cell growth. This chain is Hyaluronidase-1 (HYAL1), found in Homo sapiens (Human).